Here is a 195-residue protein sequence, read N- to C-terminus: Protein lin-28 homolog A (195 aa).

One can recognise a CSD domain in the interval 33 to 106 (QGSGVCKWFN…GLESTQVTGP (74 aa)). Residues 98 to 127 (LESTQVTGPGGAPCIGSERRPKVKGQQKRR) are disordered. The interval 107–130 (GGAPCIGSERRPKVKGQQKRRQRG) is flexible linker. Basic residues predominate over residues 118-127 (PKVKGQQKRR). 2 CCHC-type zinc fingers span residues 131–148 (DRCY…ECKL) and 153–170 (KKCH…QCPE). The Zn(2+) site is built by C133, C136, H141, C146, C155, C158, H163, and C168.

The protein belongs to the lin-28 family. As to quaternary structure, monomer.

The protein resides in the cytoplasm. It is found in the rough endoplasmic reticulum. The protein localises to the P-body. Its subcellular location is the stress granule. It localises to the nucleus. The protein resides in the nucleolus. In terms of biological role, RNA-binding protein that inhibits processing of pre-let-7 miRNAs and regulates translation of mRNAs that control developmental timing, pluripotency and metabolism. Seems to recognize a common structural G-quartet (G4) feature in its miRNA and mRNA targets. 'Translational enhancer' that drives specific mRNAs to polysomes and increases the efficiency of protein synthesis. Its association with the translational machinery and target mRNAs results in an increased number of initiation events per molecule of mRNA and, indirectly, in mRNA stabilization. Suppressor of microRNA (miRNA) biogenesis, including that of let-7. Binds specific target miRNA precursors (pre-miRNAs), recognizing an 5'-GGAG-3' motif found in their terminal loop, and recruits uridylyltransferase. This results in the terminal uridylation of target pre-miRNAs. Uridylated pre-miRNAs fail to be processed by Dicer and undergo degradation. Localized to the periendoplasmic reticulum area, binds to a large number of spliced mRNAs and inhibits the translation of mRNAs destined for the ER, reducing the synthesis of transmembrane proteins, ER or Golgi lumen proteins, and secretory proteins. Binds to and enhances the translation of mRNAs for several metabolic enzymes, increasing glycolysis and oxidative phosphorylation. Which, with the let-7 repression may enhance tissue repair in adult tissue. In Xenopus laevis (African clawed frog), this protein is Protein lin-28 homolog A (lin28a).